Consider the following 290-residue polypeptide: Probable septum site-determining protein MinC (290 aa).

This sequence belongs to the MinC family. In terms of assembly, interacts with MinD and FtsZ.

Cell division inhibitor that blocks the formation of polar Z ring septums. Rapidly oscillates between the poles of the cell to destabilize FtsZ filaments that have formed before they mature into polar Z rings. Prevents FtsZ polymerization. In Heliobacterium modesticaldum (strain ATCC 51547 / Ice1), this protein is Probable septum site-determining protein MinC.